The following is a 33-amino-acid chain: Rhinophrynin-33 (33 aa).

Expressed by the skin glands.

It localises to the secreted. Its function is as follows. Non-cytotoxic peptide with immunosuppressive and insulinotropic effects. Induces an increased production of the anti-inflammatory cytokine IL-10 and inhibits production of the pro-inflammatory cytokines TNF-alpha and IL-1beta, when incubated with mouse peritoneal cells. Does not display growth-inhibitory activity against the Gram-positive S.epidermidis and Gram-negative E.coli bacteria and against the opportunistic yeast pathogen C.parapsilosis (MIC&gt;128 uM). In addition, it lacks cytotoxic activity against mouse erythrocytes (LC(50)&gt;500 uM) and A549 human non-small cell lung adenocarcinoma cells (LC(50)&gt;100 uM). Moderately stimulates insulin release from rat clonal beta-cells and mouse pancreatic islets. Functionally, non-cytotoxic peptide with immunosuppressive but without insulinotropic effects. Inhibits production of the pro-inflammatory cytokines TNF-alpha, but has no effect on IL-10 and IL-1beta production, when incubated with mouse peritoneal cells. Has no activity of stimulation of insulin release. The chain is Rhinophrynin-33 from Rhinophrynus dorsalis (Mexican burrowing toad).